We begin with the raw amino-acid sequence, 374 residues long: tRNA-specific 2-thiouridylase MnmA (374 aa).

ATP is bound by residues 12-19 (GMSGGVDS) and Met38. The segment at 98–100 (NPD) is interaction with target base in tRNA. Catalysis depends on Cys103, which acts as the Nucleophile. Cys103 and Cys200 are oxidised to a cystine. Gly127 provides a ligand contact to ATP. The interaction with tRNA stretch occupies residues 150 to 152 (KDQ). The active-site Cysteine persulfide intermediate is Cys200. Positions 311–312 (RY) are interaction with tRNA.

This sequence belongs to the MnmA/TRMU family.

It is found in the cytoplasm. It catalyses the reaction S-sulfanyl-L-cysteinyl-[protein] + uridine(34) in tRNA + AH2 + ATP = 2-thiouridine(34) in tRNA + L-cysteinyl-[protein] + A + AMP + diphosphate + H(+). Catalyzes the 2-thiolation of uridine at the wobble position (U34) of tRNA, leading to the formation of s(2)U34. The chain is tRNA-specific 2-thiouridylase MnmA from Enterococcus faecalis (strain ATCC 700802 / V583).